Reading from the N-terminus, the 186-residue chain is UPF0397 protein LBUL_1584 (186 aa).

5 helical membrane passes run 13 to 33 (IAAL…ASIP), 46 to 66 (AFLA…VGFI), 79 to 99 (TWWN…LYAL), 114 to 134 (VIFN…LGSV), and 150 to 170 (QAGL…TILL).

Belongs to the UPF0397 family.

Its subcellular location is the cell membrane. The protein is UPF0397 protein LBUL_1584 of Lactobacillus delbrueckii subsp. bulgaricus (strain ATCC BAA-365 / Lb-18).